Reading from the N-terminus, the 493-residue chain is Putative BTB/POZ domain-containing protein L35 (493 aa).

Residues 16–87 (TDLKLTLVDD…YLVDNKSEVD (72 aa)) enclose the BTB domain.

It belongs to the mimivirus BTB/WD family.

In Acanthamoeba polyphaga (Amoeba), this protein is Putative BTB/POZ domain-containing protein L35.